The sequence spans 128 residues: RxLR effector protein SFI2 (128 aa).

The N-terminal stretch at 1-22 is a signal peptide; sequence MRSAFYIFLVVAVLARCSVVAA. The RxLR-dEER signature appears at 52 to 71; the sequence is RLLRVAGREDDDATTDEEDR.

Belongs to the RxLR effector family.

The protein localises to the secreted. Its subcellular location is the host nucleus. In terms of biological role, effector that suppresses flg22-induced post-translational MAP kinase activation both tomato and Arabidopsis. The perception of highly conserved pathogen- or microbe-associated molecular patterns (PAMPs/MAMPs), such as flg22, triggers converging signaling pathways recruiting MAP kinase cascades and inducing transcriptional re-programming, yielding a generic antimicrobial response. The sequence is that of RxLR effector protein SFI2 from Phytophthora infestans (strain T30-4) (Potato late blight agent).